A 471-amino-acid chain; its full sequence is Abscisic acid 8'-hydroxylase 1 (471 aa).

A helical membrane pass occupies residues 1 to 21 (MGAFLLFVCVLAPFLLVCAVR). Cys-415 provides a ligand contact to heme.

This sequence belongs to the cytochrome P450 family. Requires heme as cofactor. In terms of tissue distribution, in seedlings and expanding leaves.

Its subcellular location is the membrane. The catalysed reaction is 2-cis-(+)-abscisate + reduced [NADPH--hemoprotein reductase] + O2 = (+)-8'-hydroxyabscisate + oxidized [NADPH--hemoprotein reductase] + H2O + H(+). It participates in plant hormone degradation; abscisic acid degradation. Its function is as follows. Involved in the oxidative degradation of abscisic acid. In Oryza sativa subsp. indica (Rice), this protein is Abscisic acid 8'-hydroxylase 1 (CYP707A5).